A 707-amino-acid chain; its full sequence is Elongation factor G (707 aa).

Residues 8-290 (ERYRNIGICA…AVIEYLPSPT (283 aa)) form the tr-type G domain. Residues 17-24 (AHVDAGKT), 88-92 (DTPGH), and 142-145 (NKMD) contribute to the GTP site.

It belongs to the TRAFAC class translation factor GTPase superfamily. Classic translation factor GTPase family. EF-G/EF-2 subfamily.

It localises to the cytoplasm. Catalyzes the GTP-dependent ribosomal translocation step during translation elongation. During this step, the ribosome changes from the pre-translocational (PRE) to the post-translocational (POST) state as the newly formed A-site-bound peptidyl-tRNA and P-site-bound deacylated tRNA move to the P and E sites, respectively. Catalyzes the coordinated movement of the two tRNA molecules, the mRNA and conformational changes in the ribosome. This is Elongation factor G from Idiomarina loihiensis (strain ATCC BAA-735 / DSM 15497 / L2-TR).